An 85-amino-acid chain; its full sequence is Large ribosomal subunit protein bL31B (85 aa).

It belongs to the bacterial ribosomal protein bL31 family. Type B subfamily. Part of the 50S ribosomal subunit.

This is Large ribosomal subunit protein bL31B from Pseudarthrobacter chlorophenolicus (strain ATCC 700700 / DSM 12829 / CIP 107037 / JCM 12360 / KCTC 9906 / NCIMB 13794 / A6) (Arthrobacter chlorophenolicus).